Here is a 498-residue protein sequence, read N- to C-terminus: Cytochrome c-552 (498 aa).

The signal sequence occupies residues 1 to 31; it reads MKNKERKLKSWQGWLIFSSSMVVVFCLGLLA. Residue His119 participates in heme c binding. 3 residues coordinate heme: Cys148, Cys151, and Lys152. Heme c is bound by residues Cys186, Cys189, His190, Cys228, Cys231, and His232. Residues Glu234, Tyr235, Lys280, and Gln282 each contribute to the Ca(2+) site. Tyr235 contacts substrate. His283 serves as a coordination point for substrate. His294, Cys301, Cys304, His305, His319, Cys332, Cys335, His336, and His411 together coordinate heme c.

It belongs to the cytochrome c-552 family. Ca(2+) serves as cofactor. Heme c is required as a cofactor.

The protein localises to the periplasm. The enzyme catalyses 6 Fe(III)-[cytochrome c] + NH4(+) + 2 H2O = 6 Fe(II)-[cytochrome c] + nitrite + 8 H(+). The protein operates within nitrogen metabolism; nitrate reduction (assimilation). Functionally, catalyzes the reduction of nitrite to ammonia, consuming six electrons in the process. This Porphyromonas gingivalis (strain ATCC BAA-308 / W83) protein is Cytochrome c-552.